Consider the following 274-residue polypeptide: Putative septum site-determining protein MinD (274 aa).

An ATP-binding site is contributed by 22–29 (KGGVGKTT).

This sequence belongs to the ParA family. MinD subfamily.

It is found in the plastid. It localises to the chloroplast. Its function is as follows. ATPase required for the correct placement of the division site. In Nephroselmis olivacea (Green alga), this protein is Putative septum site-determining protein MinD (minD-A).